Reading from the N-terminus, the 154-residue chain is Telokin (154 aa).

The disordered stretch occupies residues 1–24 (ISGMSGRKASGSSPTSPINANKVE). Residues 10–19 (SGSSPTSPIN) show a composition bias toward polar residues. In terms of domain architecture, Ig-like C2-type spans 42-133 (PYFTKTILDM…ATCTAELLVE (92 aa)). The tract at residues 134–154 (TMGKEGEGEGEGEEDEEEEEE) is disordered. Residues 141-154 (GEGEGEEDEEEEEE) show a composition bias toward acidic residues.

It belongs to the protein kinase superfamily. CAMK Ser/Thr protein kinase family. Binds calmodulin.

Functionally, corresponds to the C-terminus of smooth muscle myosin light chain kinase. This Meleagris gallopavo (Wild turkey) protein is Telokin.